The following is a 646-amino-acid chain: Hexon protein p72 (646 aa).

The protein belongs to the NCLDV major capsid protein family. In terms of assembly, homotrimer. The membrane-bound form, but not the cytosolic one, assembles into large complexes. Interacts with the minor capsid proteins M1249L and p17; these interactions form a rigid zipper structure that stabilizes the capsomers.

It localises to the virion. Its subcellular location is the host endoplasmic reticulum membrane. The protein localises to the host cytoplasm. The protein resides in the host cytosol. Functionally, capsid protein that self-assembles to form the pseudo-hexameric capsomers of the icosahedral capsid. The capsid is constructed of 2760 pseudo-hexameric capsomers and 12 pentameric capsomers, with a T=277 symmetry, about 200 nm in diameter. The capsid encapsulates the DNA-containing nucleoid, the core shell and the inner membrane. Plays an essential role in virion assembly. Involved in virus attachment to the host cell. The sequence is that of Hexon protein p72 from Ornithodoros (relapsing fever ticks).